The chain runs to 79 residues: Protein SNA2 (79 aa).

The Cytoplasmic portion of the chain corresponds to 1 to 6 (MHARDW). Residues 7–27 (FLVFIAIFIPPLAVWLKRGFF) traverse the membrane as a helical segment. The Vesicular portion of the chain corresponds to 28-32 (TKDLL). A helical transmembrane segment spans residues 33-53 (INFLLFLLGFFPGLIHALYVI). Over 54 to 79 (SCHPYEENEARYSHLSSSDDNYGSLA) the chain is Cytoplasmic. Serine 71 and serine 77 each carry phosphoserine.

It belongs to the UPF0057 (PMP3) family.

It is found in the membrane. The protein localises to the lipid droplet. The protein is Protein SNA2 (SNA2) of Saccharomyces cerevisiae (strain ATCC 204508 / S288c) (Baker's yeast).